The chain runs to 350 residues: Magnesium-chelatase 38 kDa subunit (350 aa).

An ATP-binding site is contributed by 52 to 59; that stretch reads GDRGTGKS.

This sequence belongs to the Mg-chelatase subunits D/I family.

It carries out the reaction protoporphyrin IX + Mg(2+) + ATP + H2O = Mg-protoporphyrin IX + ADP + phosphate + 3 H(+). Its pathway is porphyrin-containing compound metabolism; bacteriochlorophyll biosynthesis. Functionally, involved in bacteriochlorophyll biosynthesis; introduces a magnesium ion into protoporphyrin IX to yield Mg-protoporphyrin IX. The chain is Magnesium-chelatase 38 kDa subunit (bchI) from Rhodobacter capsulatus (strain ATCC BAA-309 / NBRC 16581 / SB1003).